Consider the following 81-residue polypeptide: Photosystem I iron-sulfur center (81 aa).

2 4Fe-4S ferredoxin-type domains span residues 2-31 (AHSV…MVPW) and 39-68 (IASA…VRVY). Residues Cys11, Cys14, Cys17, Cys21, Cys48, Cys51, Cys54, and Cys58 each coordinate [4Fe-4S] cluster.

The eukaryotic PSI reaction center is composed of at least 11 subunits. The cofactor is [4Fe-4S] cluster.

It is found in the plastid. The protein localises to the chloroplast thylakoid membrane. It catalyses the reaction reduced [plastocyanin] + hnu + oxidized [2Fe-2S]-[ferredoxin] = oxidized [plastocyanin] + reduced [2Fe-2S]-[ferredoxin]. Functionally, apoprotein for the two 4Fe-4S centers FA and FB of photosystem I (PSI); essential for photochemical activity. FB is the terminal electron acceptor of PSI, donating electrons to ferredoxin. The C-terminus interacts with PsaA/B/D and helps assemble the protein into the PSI complex. Required for binding of PsaD and PsaE to PSI. PSI is a plastocyanin-ferredoxin oxidoreductase, converting photonic excitation into a charge separation, which transfers an electron from the donor P700 chlorophyll pair to the spectroscopically characterized acceptors A0, A1, FX, FA and FB in turn. The polypeptide is Photosystem I iron-sulfur center (Gnetum gnemon (Spanish joint-fir)).